The chain runs to 194 residues: Adenylate kinase (194 aa).

11-16 (GSGKGT) is a binding site for ATP. An NMP region spans residues 31–60 (STGELLRAEIKAQTELGQAAAGYINEGHLV). Residues Thr32, Arg37, 58 to 60 (HLV), 86 to 89 (GFPR), and Gln93 each bind AMP. The tract at residues 127–137 (NRGKVSGRSDD) is LID. Arg128 lines the ATP pocket. AMP is bound by residues Arg134 and Arg145. Gly173 is a binding site for ATP.

This sequence belongs to the adenylate kinase family. In terms of assembly, monomer.

It is found in the cytoplasm. The catalysed reaction is AMP + ATP = 2 ADP. Its pathway is purine metabolism; AMP biosynthesis via salvage pathway; AMP from ADP: step 1/1. Its function is as follows. Catalyzes the reversible transfer of the terminal phosphate group between ATP and AMP. Plays an important role in cellular energy homeostasis and in adenine nucleotide metabolism. The protein is Adenylate kinase of Porphyromonas gingivalis (strain ATCC BAA-308 / W83).